We begin with the raw amino-acid sequence, 507 residues long: Transposase for insertion sequences IS1326/IS1353 (507 aa).

Positions 6 to 68 (ILSAIRRWHF…PFEPKLRQWL (63 aa)) constitute an HTH IS21-type domain. Residues 19 to 40 (ASIREIARRSGLSRNTVRKYLQ) constitute a DNA-binding region (H-T-H motif). The 181-residue stretch at 122–302 (GCFIPLRFAC…TVQEAFADEQ (181 aa)) folds into the Integrase catalytic domain.

The protein belongs to the transposase IS21/IS408/IS1162 family.

In terms of biological role, required for the transposition of the insertion element. The polypeptide is Transposase for insertion sequences IS1326/IS1353 (istA) (Pseudomonas aeruginosa).